We begin with the raw amino-acid sequence, 159 residues long: Lipoprotein LpqH (159 aa).

The N-terminal stretch at 1–21 (MKRGLTVAVAGAAILVAGLSG) is a signal peptide. A lipid anchor (N-palmitoyl cysteine) is attached at cysteine 22. A lipid anchor (S-diacylglycerol cysteine) is attached at cysteine 22. The segment at 24–51 (SNKSTTGSGETTTAAGTTASPGAASGPK) is disordered. Residues 27 to 49 (STTGSGETTTAAGTTASPGAASG) are compositionally biased toward low complexity.

It belongs to the mycobacterial 19 kDa antigen family. In terms of processing, modified by Lgt on Cys-22 with an S-linked diacylglycerol with a mixture of C16, C18 and C19 fatty acids, signal peptide is removed by LspA, modifed by Lnt with an amide-linked mixture of C16 and C19 fatty acids.

Its subcellular location is the cell membrane. In terms of biological role, might be involved in ligand transport. A host TLR2 agonist, modifies host gene expression in response to pathogen. The chain is Lipoprotein LpqH (lpqH) from Mycobacterium tuberculosis (strain CDC 1551 / Oshkosh).